We begin with the raw amino-acid sequence, 247 residues long: tRNA pseudouridine synthase A (247 aa).

Catalysis depends on Asp-53, which acts as the Nucleophile. Tyr-111 serves as a coordination point for substrate.

This sequence belongs to the tRNA pseudouridine synthase TruA family. As to quaternary structure, homodimer.

It carries out the reaction uridine(38/39/40) in tRNA = pseudouridine(38/39/40) in tRNA. Its function is as follows. Formation of pseudouridine at positions 38, 39 and 40 in the anticodon stem and loop of transfer RNAs. The sequence is that of tRNA pseudouridine synthase A from Bacillus licheniformis (strain ATCC 14580 / DSM 13 / JCM 2505 / CCUG 7422 / NBRC 12200 / NCIMB 9375 / NCTC 10341 / NRRL NRS-1264 / Gibson 46).